The sequence spans 374 residues: L-serine/homoserine O-acetyltransferase (374 aa).

The region spanning 46-357 (AVLVLTGLSP…TPAGHDAFLV (312 aa)) is the AB hydrolase-1 domain. Ser149 serves as the catalytic Nucleophile. Residues Asp319 and His352 contribute to the active site.

This sequence belongs to the AB hydrolase superfamily. MetX family. As to quaternary structure, homodimer.

The protein localises to the cytoplasm. It catalyses the reaction L-serine + acetyl-CoA = O-acetyl-L-serine + CoA. The catalysed reaction is L-homoserine + acetyl-CoA = O-acetyl-L-homoserine + CoA. The protein operates within antibiotic biosynthesis. Involved in the biosynthesis of the antibiotic D-cycloserine (DCS), a cyclic structural analog of D-alanine, used as an antitubercular agent. Catalyzes the transfer of the acetyl group from acetyl-CoA to the hydroxyl group of L-serine to yield the activated serine, O-acetyl-L-serine. It prefers L-serine over L-homoserine. This chain is L-serine/homoserine O-acetyltransferase, found in Streptomyces lavendulae.